A 611-amino-acid chain; its full sequence is MTLDNLKHSAILSTLFKMADDNDLLGASEFIKDRLYFATLRSKPKSTANTHYFSTDEEFVYENFYADFGPLNLAMLYRYCCKLNKKLKSFTLTRKRIVHYTSFDQRKRANAAVLIGAYAVIYLKKTPEEAYRALISGSNASYLPFRDASFGNCTYNLTVLDCLQGIRKALQHGFLNFETFDVNEYEHYERVENGDLNWITPGKLLAFSGPHPKSKVENGYPLHAPEAYFPYFRKHNVTTIVRLNKKIYDAKRFTDAGFDHYDLFFVDGSTPSDIITRRFLHICESTSGAVAVHCKAGLGRTGTLIGCYLMKHYRFTSAEAIAWIRICRPGSIIGPQQHYLEEKQASLWAHGDSLRSKQRQYQDRSVPQLISSMDNLSISTSIFKSHSLDRMEENDYAENDLGMTQGDKLRALKGRRQPRSATTGAIRVEDVKVHTRSPSQPLSRMKPPASSQGSISPLKSSKVPASSSSSSSSSSVSASAKRIGRSSSSSTNLKSTRLASSLGNLYEPNTESISSGKPPSPSSFTPHPVRTTYNYHYEVNNNNNQYSTTSSPSKSLGYNLNHSGPSGASANARLSAGEQGHQRNPPAGLSGLSTRHLSRSIPSLQSEYVQY.

Positions 23–178 (DLLGASEFIK…ALQHGFLNFE (156 aa)) are a. The linker stretch occupies residues 179–192 (TFDVNEYEHYERVE). The tract at residues 193-359 (NGDLNWITPG…HGDSLRSKQR (167 aa)) is b. A Tyrosine-protein phosphatase domain is found at 194 to 352 (GDLNWITPGK…KQASLWAHGD (159 aa)). The Phosphocysteine intermediate role is filled by Cys294. A disordered region spans residues 408 to 611 (KLRALKGRRQ…PSLQSEYVQY (204 aa)). Positions 456 to 490 (SPLKSSKVPASSSSSSSSSSVSASAKRIGRSSSSS) are enriched in low complexity. The segment covering 491–511 (TNLKSTRLASSLGNLYEPNTE) has biased composition (polar residues). A compositionally biased stretch (low complexity) spans 512–553 (SISSGKPPSPSSFTPHPVRTTYNYHYEVNNNNNQYSTTSSPS). Composition is skewed to polar residues over residues 554–569 (KSLGYNLNHSGPSGAS) and 591–611 (GLSTRHLSRSIPSLQSEYVQY).

It belongs to the protein-tyrosine phosphatase family. Non-receptor class CDC14 subfamily.

It localises to the nucleus. Its subcellular location is the cytoplasm. The protein localises to the cytoskeleton. The protein resides in the microtubule organizing center. It is found in the centrosome. It localises to the spindle pole. Its subcellular location is the spindle. The protein localises to the cell projection. The protein resides in the kinocilium. It catalyses the reaction O-phospho-L-tyrosyl-[protein] + H2O = L-tyrosyl-[protein] + phosphate. The enzyme catalyses O-phospho-L-seryl-[protein] + H2O = L-seryl-[protein] + phosphate. It carries out the reaction O-phospho-L-threonyl-[protein] + H2O = L-threonyl-[protein] + phosphate. Its function is as follows. Dual-specificity phosphatase. Required for centrosome separation and productive cytokinesis during cell division. Dephosphorylates SIRT2 around early anaphase. May dephosphorylate the APC subunit FZR1/CDH1, thereby promoting APC-FZR1 dependent degradation of mitotic cyclins and subsequent exit from mitosis. This is Dual specificity protein phosphatase CDC14AB (cdc14ab) from Danio rerio (Zebrafish).